The chain runs to 1299 residues: Cilia- and flagella-associated protein 251 (1299 aa).

The tract at residues 1-351 (MSDTEENPLE…SQKPEDILAQ (351 aa)) is disordered. Acidic residues-rich tracts occupy residues 17 to 45 (EMEEEKEEKKEEEEEEEEGEKEKEEEEEE), 91 to 162 (EKEE…EEDA), and 176 to 189 (ESQEDGEGLEEWVE). Residues 190-199 (KEEQREGEEV) are compositionally biased toward basic and acidic residues. The span at 212-228 (EEEGWEEEKSGEEEKSE) shows a compositional bias: acidic residues. Residues 229 to 257 (ESERSKERGGEEEGQEKEEAEHEGEREEG) show a composition bias toward basic and acidic residues. The span at 269–280 (REEEEEEEDTET) shows a compositional bias: acidic residues. 2 stretches are compositionally biased toward basic and acidic residues: residues 281 to 297 (TETKAGRAKEEKKEKQN) and 331 to 351 (NSMKVDDTEEASQKPEDILAQ). WD repeat units lie at residues 484 to 526 (PVHT…IWKW), 534 to 574 (ACTL…CWFE), 585 to 624 (VLTEKTFNKLVGKFSQSVFHLKLPQVLSATKEGKLVVWDI), 643 to 678 (PRKLVHLQKEAITVLMTIDSYIVTGDIKGNIKFYDH), 681 to 741 (SVVN…VYHM), 745 to 785 (GTKL…VWDF), 791 to 828 (LFSRTFEKGLGVQCLTYNPEGALLGAGFTEGTVYILDA), 838 to 874 (PFKYSKSSVSHCCFSHDSNYMATADVNFTVAVYMVVV), 881 to 924 (WEYL…EYNL), 935 to 975 (LDVH…LFNA), 981 to 1027 (RKTL…ILPV), 1033 to 1071 (KTCAIVCHPNGVAGMALSYDGRFAFTAGGQDRSVVQWKI), 1109 to 1149 (YFYY…FYPS), and 1169 to 1209 (GKLI…GYTN).

Its subcellular location is the cytoplasm. The protein localises to the cytoskeleton. It localises to the cilium axoneme. It is found in the cell projection. The protein resides in the cilium. Its subcellular location is the flagellum. In terms of biological role, involved in spermatozoa motility. May also regulate cilium motility through its role in the assembly of the axonemal radial spokes. The protein is Cilia- and flagella-associated protein 251 of Mus musculus (Mouse).